The primary structure comprises 274 residues: Protein TIC 20-I, chloroplastic (274 aa).

The transit peptide at 1–65 directs the protein to the chloroplast; the sequence is MITGYSTPSA…ELPRVSRGVP (65 aa). 4 helical membrane passes run 130 to 152, 167 to 187, 200 to 220, and 229 to 249; these read LPYL…LHPF, IGRL…LGIV, VVMG…SKWM, and FGMH…LESI.

Belongs to the Tic20 family. In terms of assembly, part of the Tic complex. Component of the 1-MD complex, composed of TIC20-I, TIC214, TIC100 and TIC56. Interacts with the translocating preproteins. Hydrolysis of ATP is essential for the formation of this complex. The 1-MD complex interacts with TIC21. In terms of tissue distribution, expressed in leaves, shoots and roots. High expression in mature photosynthetic tissues. Lower levels in non-photosynthetic tissues and roots.

The protein localises to the plastid. The protein resides in the chloroplast inner membrane. Its function is as follows. Involved in protein precursor import into chloroplasts. May be part of an intermediate translocation complex acting as a protein-conducting channel at the inner envelope. Seems to be specific for photosynthesis-related pre-proteins. Partially redundant with TIC20-IV, but not with TIC20-II or TIC20-V. The chain is Protein TIC 20-I, chloroplastic from Arabidopsis thaliana (Mouse-ear cress).